The following is a 354-amino-acid chain: S-adenosylmethionine:tRNA ribosyltransferase-isomerase (354 aa).

The protein belongs to the QueA family. In terms of assembly, monomer.

It localises to the cytoplasm. The catalysed reaction is 7-aminomethyl-7-carbaguanosine(34) in tRNA + S-adenosyl-L-methionine = epoxyqueuosine(34) in tRNA + adenine + L-methionine + 2 H(+). Its pathway is tRNA modification; tRNA-queuosine biosynthesis. Functionally, transfers and isomerizes the ribose moiety from AdoMet to the 7-aminomethyl group of 7-deazaguanine (preQ1-tRNA) to give epoxyqueuosine (oQ-tRNA). The sequence is that of S-adenosylmethionine:tRNA ribosyltransferase-isomerase from Thermosynechococcus vestitus (strain NIES-2133 / IAM M-273 / BP-1).